Consider the following 509-residue polypeptide: MNLMINLKPLTFLPFFGRLVFLSGVIYNTAWANTVIPVDNSRPDETFSQTSPKQHLFSQKPKPTEPTSSASSQQISLTIEQLASRPDLVLRALIPALKNNDMRGVEILLPIYAKQSPDPFLLKWAQAVVARKQGKLNESVRLYRQIIAEKPNLQPARLQLAIALTQNRENEAAKAQFNQLRSENLPAPLLTLIDSYIDTINQRDSWNVYGGVNYLHENNVNNAPPKGTKAEGFTPSSQPEKAHGLSYFINLSKNWSLAHGFFTEFSADINGKYYWDNHKYDEFSTRLNLGGGYRNAKTEVKLMPFVEQFWYVGGENATKDARTLHRYSKSSGINLDVDYWLTPNWKISTVLEYTEQRYIQPQRQNSNGNSYSISNTLIYMPNSQQFWFVGLDYYQKNTRLKAYAFERQGIRLGWGQEWPKGISTRLQTSYATRTYRAPSAEKNMIFAPSFFKVVQKNHEYGVNFTIWHRSLHWLGITPKITWAYQKTTSNNPFSEYDRNRIYLTFSKTF.

Positions M1–A32 are cleaved as a signal peptide. Residues N33 to D204 form an N-terminal domain region. The segment at P43–S72 is disordered. Residues T46–F57 show a composition bias toward polar residues. Residues F120–L153 form a TPR repeat. Residues S205–F509 form a C-terminal probable beta barrel region. 14 beta stranded membrane-spanning segments follow: residues W206–H216, L245–S256, F261–N270, S284–R294, T298–Q308, S331–L341, W345–E355, Y371–P381, F386–Q395, Q408–E417, S423–T432, G461–S470, I476–Q485, and N499–F509.

This sequence belongs to the Slam family.

Its subcellular location is the cell outer membrane. Its function is as follows. Required for correct export to the cell surface of some cell outer membrane lipoproteins (tested with PM1514) upon heterologous expression in E.coli and probably also in Pasteurella. This chain is Surface lipoprotein assembly modifier, found in Pasteurella multocida (strain Pm70).